Reading from the N-terminus, the 208-residue chain is Protein-L-isoaspartate O-methyltransferase (208 aa).

The active site involves Ser59.

Belongs to the methyltransferase superfamily. L-isoaspartyl/D-aspartyl protein methyltransferase family.

The protein resides in the cytoplasm. It carries out the reaction [protein]-L-isoaspartate + S-adenosyl-L-methionine = [protein]-L-isoaspartate alpha-methyl ester + S-adenosyl-L-homocysteine. Its function is as follows. Catalyzes the methyl esterification of L-isoaspartyl residues in peptides and proteins that result from spontaneous decomposition of normal L-aspartyl and L-asparaginyl residues. It plays a role in the repair and/or degradation of damaged proteins. In Vibrio parahaemolyticus serotype O3:K6 (strain RIMD 2210633), this protein is Protein-L-isoaspartate O-methyltransferase.